We begin with the raw amino-acid sequence, 149 residues long: 3-dehydroquinate dehydratase (149 aa).

Tyrosine 26 serves as the catalytic Proton acceptor. Asparagine 77, histidine 83, and aspartate 90 together coordinate substrate. Histidine 103 (proton donor) is an active-site residue. Substrate-binding positions include 104–105 (LS) and arginine 114.

It belongs to the type-II 3-dehydroquinase family. Homododecamer.

The catalysed reaction is 3-dehydroquinate = 3-dehydroshikimate + H2O. It functions in the pathway metabolic intermediate biosynthesis; chorismate biosynthesis; chorismate from D-erythrose 4-phosphate and phosphoenolpyruvate: step 3/7. Functionally, catalyzes a trans-dehydration via an enolate intermediate. The polypeptide is 3-dehydroquinate dehydratase (Vibrio parahaemolyticus serotype O3:K6 (strain RIMD 2210633)).